The following is a 348-amino-acid chain: Protein RecA (348 aa).

65-72 (GPESSGKT) is a binding site for ATP.

It belongs to the RecA family.

Its subcellular location is the cytoplasm. Can catalyze the hydrolysis of ATP in the presence of single-stranded DNA, the ATP-dependent uptake of single-stranded DNA by duplex DNA, and the ATP-dependent hybridization of homologous single-stranded DNAs. It interacts with LexA causing its activation and leading to its autocatalytic cleavage. The polypeptide is Protein RecA (Vibrio anguillarum (Listonella anguillarum)).